The following is a 124-amino-acid chain: Fluoride-specific ion channel FluC (124 aa).

The next 4 helical transmembrane spans lie at 4 to 24 (VLFVALGGSIGAVLRYLISLL), 35 to 55 (FGTLVVNILGSFLMGVIFALG), 62 to 82 (PEFKAFIGVGMLGALTTFSTF), and 95 to 115 (LVKAVFNVVVNVGVCIFVVYL). Positions 74 and 77 each coordinate Na(+).

Belongs to the fluoride channel Fluc/FEX (TC 1.A.43) family.

It is found in the cell inner membrane. It catalyses the reaction fluoride(in) = fluoride(out). Its activity is regulated as follows. Na(+) is not transported, but it plays an essential structural role and its presence is essential for fluoride channel function. In terms of biological role, fluoride-specific ion channel. Important for reducing fluoride concentration in the cell, thus reducing its toxicity. The polypeptide is Fluoride-specific ion channel FluC (Shewanella pealeana (strain ATCC 700345 / ANG-SQ1)).